A 258-amino-acid chain; its full sequence is Deoxyribose-phosphate aldolase (258 aa).

Aspartate 102 functions as the Proton donor/acceptor in the catalytic mechanism. Residue lysine 165 is the Schiff-base intermediate with acetaldehyde of the active site. Lysine 199 serves as the catalytic Proton donor/acceptor.

The protein belongs to the DeoC/FbaB aldolase family. DeoC type 2 subfamily.

The protein resides in the cytoplasm. The catalysed reaction is 2-deoxy-D-ribose 5-phosphate = D-glyceraldehyde 3-phosphate + acetaldehyde. Its pathway is carbohydrate degradation; 2-deoxy-D-ribose 1-phosphate degradation; D-glyceraldehyde 3-phosphate and acetaldehyde from 2-deoxy-alpha-D-ribose 1-phosphate: step 2/2. Catalyzes a reversible aldol reaction between acetaldehyde and D-glyceraldehyde 3-phosphate to generate 2-deoxy-D-ribose 5-phosphate. This chain is Deoxyribose-phosphate aldolase, found in Vibrio campbellii (strain ATCC BAA-1116).